The chain runs to 431 residues: UDP-N-acetylglucosamine 1-carboxyvinyltransferase (431 aa).

Position 24–25 (24–25 (KN)) interacts with phosphoenolpyruvate. Arg-95 contributes to the UDP-N-acetyl-alpha-D-glucosamine binding site. Asp-119 acts as the Proton donor in catalysis. UDP-N-acetyl-alpha-D-glucosamine contacts are provided by Asp-314 and Met-336.

Belongs to the EPSP synthase family. MurA subfamily.

Its subcellular location is the cytoplasm. The catalysed reaction is phosphoenolpyruvate + UDP-N-acetyl-alpha-D-glucosamine = UDP-N-acetyl-3-O-(1-carboxyvinyl)-alpha-D-glucosamine + phosphate. It functions in the pathway cell wall biogenesis; peptidoglycan biosynthesis. In terms of biological role, cell wall formation. Adds enolpyruvyl to UDP-N-acetylglucosamine. The chain is UDP-N-acetylglucosamine 1-carboxyvinyltransferase from Bradyrhizobium diazoefficiens (strain JCM 10833 / BCRC 13528 / IAM 13628 / NBRC 14792 / USDA 110).